Reading from the N-terminus, the 855-residue chain is DNA mismatch repair protein MutS (855 aa).

Residue Gly-616–Ser-623 coordinates ATP.

This sequence belongs to the DNA mismatch repair MutS family.

In terms of biological role, this protein is involved in the repair of mismatches in DNA. It is possible that it carries out the mismatch recognition step. This protein has a weak ATPase activity. This is DNA mismatch repair protein MutS from Salmonella dublin (strain CT_02021853).